The chain runs to 425 residues: Serine--tRNA ligase (425 aa).

233–235 (TAE) is an L-serine binding site. Position 264–266 (264–266 (RRE)) interacts with ATP. Residue Glu-287 participates in L-serine binding. 351–354 (EISS) is a binding site for ATP. Ser-387 contacts L-serine.

Belongs to the class-II aminoacyl-tRNA synthetase family. Type-1 seryl-tRNA synthetase subfamily. Homodimer. The tRNA molecule binds across the dimer.

The protein resides in the cytoplasm. The enzyme catalyses tRNA(Ser) + L-serine + ATP = L-seryl-tRNA(Ser) + AMP + diphosphate + H(+). It catalyses the reaction tRNA(Sec) + L-serine + ATP = L-seryl-tRNA(Sec) + AMP + diphosphate + H(+). It participates in aminoacyl-tRNA biosynthesis; selenocysteinyl-tRNA(Sec) biosynthesis; L-seryl-tRNA(Sec) from L-serine and tRNA(Sec): step 1/1. In terms of biological role, catalyzes the attachment of serine to tRNA(Ser). Is also able to aminoacylate tRNA(Sec) with serine, to form the misacylated tRNA L-seryl-tRNA(Sec), which will be further converted into selenocysteinyl-tRNA(Sec). The protein is Serine--tRNA ligase of Thermotoga petrophila (strain ATCC BAA-488 / DSM 13995 / JCM 10881 / RKU-1).